The chain runs to 123 residues: Large ribosomal subunit protein bL17 (123 aa).

This sequence belongs to the bacterial ribosomal protein bL17 family. In terms of assembly, part of the 50S ribosomal subunit. Contacts protein L32.

The polypeptide is Large ribosomal subunit protein bL17 (Borrelia garinii subsp. bavariensis (strain ATCC BAA-2496 / DSM 23469 / PBi) (Borreliella bavariensis)).